The sequence spans 105 residues: Antitoxin HigA-1 (105 aa).

One can recognise an HTH cro/C1-type domain in the interval 15-69 (LKVEFLEPMGITSKALAEAMGVHRNTVSNLINGGVLTAPVAIKLAAALGNTPEFW). The segment at residues 27–46 (SKALAEAMGVHRNTVSNLIN) is a DNA-binding region (H-T-H motif).

Its function is as follows. Antitoxin component of a type II toxin-antitoxin (TA) system that counteracts the effect of the HigB-1 toxin. Binds to its own promoter and regulates transcription of the higB-1/higA-1 operon. This Vibrio cholerae serotype O1 (strain ATCC 39315 / El Tor Inaba N16961) protein is Antitoxin HigA-1 (higA-1).